Reading from the N-terminus, the 184-residue chain is MYTMAQIKTDKILGSRRISNYFWATIILLGGLSFFLVGLSSYLKIELLPFTKSTDLLFLPQGIIMTFYGTAAILISLFLWLTIIWNIGSGYNEFNRDIGLVTIYRLGFPGKNRLIKLRYKIHDIYSIKVQIQEGLTPKREIYLKTKDKREIPLTQVGQPMSLAQIEERAAFLAKFLGVILEGIR.

A run of 2 helical transmembrane segments spans residues 21 to 41 (YFWATIILLGGLSFFLVGLSS) and 63 to 83 (IIMTFYGTAAILISLFLWLTI).

The protein belongs to the Ycf4 family.

It is found in the plastid. Its subcellular location is the chloroplast thylakoid membrane. Its function is as follows. Seems to be required for the assembly of the photosystem I complex. The sequence is that of Photosystem I assembly protein Ycf4 from Gracilaria tenuistipitata var. liui (Red alga).